The sequence spans 359 residues: DNA polymerase IV (359 aa).

The region spanning 4-185 (IIHIDMDCYF…LSLRKIPGVG (182 aa)) is the UmuC domain. The Mg(2+) site is built by Asp8 and Asp103. Residue Glu104 is part of the active site.

This sequence belongs to the DNA polymerase type-Y family. Monomer. The cofactor is Mg(2+).

The protein localises to the cytoplasm. It catalyses the reaction DNA(n) + a 2'-deoxyribonucleoside 5'-triphosphate = DNA(n+1) + diphosphate. Poorly processive, error-prone DNA polymerase involved in untargeted mutagenesis. Copies undamaged DNA at stalled replication forks, which arise in vivo from mismatched or misaligned primer ends. These misaligned primers can be extended by PolIV. Exhibits no 3'-5' exonuclease (proofreading) activity. May be involved in translesional synthesis, in conjunction with the beta clamp from PolIII. This chain is DNA polymerase IV, found in Shewanella sp. (strain MR-7).